Here is a 447-residue protein sequence, read N- to C-terminus: Na(+)-translocating NADH-quinone reductase subunit A (447 aa).

Belongs to the NqrA family. As to quaternary structure, composed of six subunits; NqrA, NqrB, NqrC, NqrD, NqrE and NqrF.

It catalyses the reaction a ubiquinone + n Na(+)(in) + NADH + H(+) = a ubiquinol + n Na(+)(out) + NAD(+). Its function is as follows. NQR complex catalyzes the reduction of ubiquinone-1 to ubiquinol by two successive reactions, coupled with the transport of Na(+) ions from the cytoplasm to the periplasm. NqrA to NqrE are probably involved in the second step, the conversion of ubisemiquinone to ubiquinol. This Neisseria meningitidis serogroup C / serotype 2a (strain ATCC 700532 / DSM 15464 / FAM18) protein is Na(+)-translocating NADH-quinone reductase subunit A.